Consider the following 443-residue polypeptide: Protein translocase subunit SecY (443 aa).

10 consecutive transmembrane segments (helical) span residues 24–44 (LFVI…IPGI), 77–97 (IFAL…LLTV), 125–145 (LVLA…MPGM), 154–174 (FAFY…LMWL), 183–203 (IGNG…PPAI), 217–237 (FLVL…VVFV), 274–294 (VIPA…ASWF), 317–337 (YVLL…ALVF), 370–390 (MTRL…IPEF), and 397–417 (VPFY…MDFM).

The protein belongs to the SecY/SEC61-alpha family. In terms of assembly, component of the Sec protein translocase complex. Heterotrimer consisting of SecY, SecE and SecG subunits. The heterotrimers can form oligomers, although 1 heterotrimer is thought to be able to translocate proteins. Interacts with the ribosome. Interacts with SecDF, and other proteins may be involved. Interacts with SecA.

The protein resides in the cell inner membrane. The central subunit of the protein translocation channel SecYEG. Consists of two halves formed by TMs 1-5 and 6-10. These two domains form a lateral gate at the front which open onto the bilayer between TMs 2 and 7, and are clamped together by SecE at the back. The channel is closed by both a pore ring composed of hydrophobic SecY resides and a short helix (helix 2A) on the extracellular side of the membrane which forms a plug. The plug probably moves laterally to allow the channel to open. The ring and the pore may move independently. The protein is Protein translocase subunit SecY of Escherichia coli O157:H7.